A 94-amino-acid chain; its full sequence is ESAT-6-like protein EsxI (94 aa).

The protein belongs to the WXG100 family. ESAT-6 subfamily.

It localises to the secreted. In Mycobacterium tuberculosis (strain CDC 1551 / Oshkosh), this protein is ESAT-6-like protein EsxI.